A 317-amino-acid polypeptide reads, in one-letter code: Acetyl-coenzyme A carboxylase carboxyl transferase subunit alpha (317 aa).

The CoA carboxyltransferase C-terminal domain occupies 40-294; sequence RLQKKSEELT…KQQILADLQD (255 aa).

The protein belongs to the AccA family. As to quaternary structure, acetyl-CoA carboxylase is a heterohexamer composed of biotin carboxyl carrier protein (AccB), biotin carboxylase (AccC) and two subunits each of ACCase subunit alpha (AccA) and ACCase subunit beta (AccD).

The protein localises to the cytoplasm. It carries out the reaction N(6)-carboxybiotinyl-L-lysyl-[protein] + acetyl-CoA = N(6)-biotinyl-L-lysyl-[protein] + malonyl-CoA. The protein operates within lipid metabolism; malonyl-CoA biosynthesis; malonyl-CoA from acetyl-CoA: step 1/1. In terms of biological role, component of the acetyl coenzyme A carboxylase (ACC) complex. First, biotin carboxylase catalyzes the carboxylation of biotin on its carrier protein (BCCP) and then the CO(2) group is transferred by the carboxyltransferase to acetyl-CoA to form malonyl-CoA. The chain is Acetyl-coenzyme A carboxylase carboxyl transferase subunit alpha from Actinobacillus pleuropneumoniae serotype 5b (strain L20).